The following is a 191-amino-acid chain: Programmed cell death protein 6 (191 aa).

Ala2 is subject to N-acetylalanine. 5 EF-hand domains span residues 23-58, 59-89, 90-125, 126-161, and 162-191; these read PDQS…GTWT, PFNP…TGVW, KYIT…FGYR, LSDQ…LQRL, and TDIF…FSIV. 5 residues coordinate Ca(2+): Asp36, Asp38, Ser40, Val42, and Glu47. Positions 103, 105, 107, 109, and 114 each coordinate Ca(2+). Positions 169, 171, 173, and 175 each coordinate Mg(2+).

As to quaternary structure, homodimer and heterodimer; heterodimerizes (via the EF-hand 5) with PEF1. Isoform 1 and isoform 2 self-associate; probably forming homodimers. Interacts with CPNE4 (via VWFA domain). Interacts with PDCD6IP; the interaction is calcium-dependent. Interacts with RBM22. Interacts with PLSCR4. Interacts with ANXA7 and TSG101. Interacts with DAPK1. Interacts with SEC31A; the interaction is calcium-dependent and promotes monoubiquitination of SEC31A. Interacts with ANXA11 (via N-terminus); the interaction is calcium-dependent. Interacts with PLSCR3 (via N-terminus); the interaction is calcium-dependent. Interacts with MCOLN1; the interaction is calcium-dependent. Interacts with KDR; the interaction is calcium-dependent. Interacts with HEBP2; the interaction is calcium-dependent. Interacts with TFG. Isoform 1: Interacts with SHISA5, leading to stabilize it. Isoform 2: Does not interact with SHISA5. Isoform 2: Does not interact with PDCD6IP, TSG101, ANXA7 and ANXA11.

It is found in the endoplasmic reticulum membrane. The protein localises to the cytoplasmic vesicle. The protein resides in the COPII-coated vesicle membrane. It localises to the cytoplasm. Its subcellular location is the nucleus. It is found in the endosome. Calcium sensor that plays a key role in processes such as endoplasmic reticulum (ER)-Golgi vesicular transport, endosomal biogenesis or membrane repair. Acts as an adapter that bridges unrelated proteins or stabilizes weak protein-protein complexes in response to calcium: calcium-binding triggers exposure of apolar surface, promoting interaction with different sets of proteins thanks to 3 different hydrophobic pockets, leading to translocation to membranes. Involved in ER-Golgi transport by promoting the association between PDCD6IP and TSG101, thereby bridging together the ESCRT-III and ESCRT-I complexes. Together with PEF1, acts as a calcium-dependent adapter for the BCR(KLHL12) complex, a complex involved in ER-Golgi transport by regulating the size of COPII coats. In response to cytosolic calcium increase, the heterodimer formed with PEF1 interacts with, and bridges together the BCR(KLHL12) complex and SEC31 (SEC31A or SEC31B), promoting monoubiquitination of SEC31 and subsequent collagen export, which is required for neural crest specification. Involved in the regulation of the distribution and function of MCOLN1 in the endosomal pathway. Promotes localization and polymerization of TFG at endoplasmic reticulum exit site. Required for T-cell receptor-, Fas-, and glucocorticoid-induced apoptosis. May mediate Ca(2+)-regulated signals along the death pathway: interaction with DAPK1 can accelerate apoptotic cell death by increasing caspase-3 activity. Its role in apoptosis may however be indirect, as suggested by knockout experiments. May inhibit KDR/VEGFR2-dependent angiogenesis; the function involves inhibition of VEGF-induced phosphorylation of the Akt signaling pathway. In case of infection by HIV-1 virus, indirectly inhibits HIV-1 production by affecting viral Gag expression and distribution. Its function is as follows. Has a lower Ca(2+) affinity than isoform 1. This chain is Programmed cell death protein 6 (PDCD6), found in Homo sapiens (Human).